The following is a 379-amino-acid chain: Cytochrome b (379 aa).

A run of 4 helical transmembrane segments spans residues 33–53 (FGSL…FLAM), 77–98 (WLIR…FIHV), 113–133 (WNIG…GYVL), and 178–198 (FFAF…VHLL). Heme b contacts are provided by His-83 and His-97. Positions 182 and 196 each coordinate heme b. Position 201 (His-201) interacts with a ubiquinone. 4 helical membrane passes run 226–246 (TKDL…ALFF), 288–308 (LGGV…PLLN), 320–340 (VTQV…WIGG), and 347–367 (FTMI…ILMP).

This sequence belongs to the cytochrome b family. As to quaternary structure, the cytochrome bc1 complex contains 11 subunits: 3 respiratory subunits (MT-CYB, CYC1 and UQCRFS1), 2 core proteins (UQCRC1 and UQCRC2) and 6 low-molecular weight proteins (UQCRH/QCR6, UQCRB/QCR7, UQCRQ/QCR8, UQCR10/QCR9, UQCR11/QCR10 and a cleavage product of UQCRFS1). This cytochrome bc1 complex then forms a dimer. Heme b is required as a cofactor.

The protein localises to the mitochondrion inner membrane. Functionally, component of the ubiquinol-cytochrome c reductase complex (complex III or cytochrome b-c1 complex) that is part of the mitochondrial respiratory chain. The b-c1 complex mediates electron transfer from ubiquinol to cytochrome c. Contributes to the generation of a proton gradient across the mitochondrial membrane that is then used for ATP synthesis. The protein is Cytochrome b (MT-CYB) of Akodon fumeus (Smoky grass mouse).